A 235-amino-acid chain; its full sequence is Geranylgeranylglyceryl phosphate synthase (235 aa).

Lysine 13 is a sn-glycerol 1-phosphate binding site. Mg(2+) contacts are provided by aspartate 15 and threonine 42. Sn-glycerol 1-phosphate-binding positions include 162–167 (YVEYSG), glycine 192, and 212–213 (GD).

This sequence belongs to the GGGP/HepGP synthase family. Group I subfamily. It depends on Mg(2+) as a cofactor.

It is found in the cytoplasm. The enzyme catalyses sn-glycerol 1-phosphate + (2E,6E,10E)-geranylgeranyl diphosphate = sn-3-O-(geranylgeranyl)glycerol 1-phosphate + diphosphate. Its pathway is membrane lipid metabolism; glycerophospholipid metabolism. Functionally, prenyltransferase that catalyzes the transfer of the geranylgeranyl moiety of geranylgeranyl diphosphate (GGPP) to the C3 hydroxyl of sn-glycerol-1-phosphate (G1P). This reaction is the first ether-bond-formation step in the biosynthesis of archaeal membrane lipids. This is Geranylgeranylglyceryl phosphate synthase from Natronomonas pharaonis (strain ATCC 35678 / DSM 2160 / CIP 103997 / JCM 8858 / NBRC 14720 / NCIMB 2260 / Gabara) (Halobacterium pharaonis).